Reading from the N-terminus, the 940-residue chain is Protein translocase subunit SecA 1 (940 aa).

Residues glutamine 83, 101-105, and aspartate 490 contribute to the ATP site; that span reads GEGKT. Residues 856–940 are disordered; the sequence is AEQGGTATAA…AKPPKSVKRR (85 aa).

It belongs to the SecA family. Monomer and homodimer. Part of the essential Sec protein translocation apparatus which comprises SecA, SecYEG and auxiliary proteins SecDF. Other proteins may also be involved.

It localises to the cell membrane. Its subcellular location is the cytoplasm. It catalyses the reaction ATP + H2O + cellular proteinSide 1 = ADP + phosphate + cellular proteinSide 2.. In terms of biological role, part of the Sec protein translocase complex. Interacts with the SecYEG preprotein conducting channel. Has a central role in coupling the hydrolysis of ATP to the transfer of proteins into and across the cell membrane, serving as an ATP-driven molecular motor driving the stepwise translocation of polypeptide chains across the membrane. This is Protein translocase subunit SecA 1 from Mycolicibacterium paratuberculosis (strain ATCC BAA-968 / K-10) (Mycobacterium paratuberculosis).